The chain runs to 260 residues: Acetylglutamate kinase (260 aa).

Residues 46-47 (GG), Arg-68, and Asn-160 contribute to the substrate site.

It belongs to the acetylglutamate kinase family. ArgB subfamily.

The protein localises to the cytoplasm. The catalysed reaction is N-acetyl-L-glutamate + ATP = N-acetyl-L-glutamyl 5-phosphate + ADP. Its pathway is amino-acid biosynthesis; L-arginine biosynthesis; N(2)-acetyl-L-ornithine from L-glutamate: step 2/4. Functionally, catalyzes the ATP-dependent phosphorylation of N-acetyl-L-glutamate. This chain is Acetylglutamate kinase, found in Shewanella sp. (strain ANA-3).